The chain runs to 149 residues: D-aminoacyl-tRNA deacylase (149 aa).

The Gly-cisPro motif, important for rejection of L-amino acids signature appears at 137–138 (GP).

This sequence belongs to the DTD family. Homodimer.

The protein localises to the cytoplasm. The catalysed reaction is glycyl-tRNA(Ala) + H2O = tRNA(Ala) + glycine + H(+). The enzyme catalyses a D-aminoacyl-tRNA + H2O = a tRNA + a D-alpha-amino acid + H(+). Functionally, an aminoacyl-tRNA editing enzyme that deacylates mischarged D-aminoacyl-tRNAs. Also deacylates mischarged glycyl-tRNA(Ala), protecting cells against glycine mischarging by AlaRS. Acts via tRNA-based rather than protein-based catalysis; rejects L-amino acids rather than detecting D-amino acids in the active site. By recycling D-aminoacyl-tRNA to D-amino acids and free tRNA molecules, this enzyme counteracts the toxicity associated with the formation of D-aminoacyl-tRNA entities in vivo and helps enforce protein L-homochirality. This Thermoanaerobacter sp. (strain X514) protein is D-aminoacyl-tRNA deacylase.